Here is a 310-residue protein sequence, read N- to C-terminus: GMP synthase [glutamine-hydrolyzing] subunit B (310 aa).

Positions 2–185 (FKTEPFIEES…LGLPDQIAHR (184 aa)) constitute a GMPS ATP-PPase domain. 29–35 (SGGVDSS) contributes to the ATP binding site.

In terms of assembly, heterodimer composed of a glutamine amidotransferase subunit (A) and a GMP-binding subunit (B).

It carries out the reaction XMP + L-glutamine + ATP + H2O = GMP + L-glutamate + AMP + diphosphate + 2 H(+). Its pathway is purine metabolism; GMP biosynthesis; GMP from XMP (L-Gln route): step 1/1. Its function is as follows. Catalyzes the synthesis of GMP from XMP. The protein is GMP synthase [glutamine-hydrolyzing] subunit B of Methanococcus maripaludis (strain C7 / ATCC BAA-1331).